A 269-amino-acid polypeptide reads, in one-letter code: MSQQNGNVNRVGAQDRVGASGGMEHSFGFKAVDENEKQGLVNDVFHKVAKRYDIMNDLMSAGMHRVWKDAMVAWLAPSKRPGWTSLDVAGGTGDIAFRIVEVSGRQAHVTILDINGSMLGVGRERAIKKGLIDNLEFVEANAEELPFEDNSFDAYTIAFGIRNVPHIDKALSEAYRVLKPGGRFLCLEFSEVELPVLDKVYDEWSFRAIPRIGKMITGDADSYSYLVESIRKFPKQQDFAAMIEKAGFERVSYRNFTGGIAALHSGWKL.

Residues Thr92, Asp113, and 141–142 (NA) each bind S-adenosyl-L-methionine.

It belongs to the class I-like SAM-binding methyltransferase superfamily. MenG/UbiE family.

The enzyme catalyses a 2-demethylmenaquinol + S-adenosyl-L-methionine = a menaquinol + S-adenosyl-L-homocysteine + H(+). It carries out the reaction a 2-methoxy-6-(all-trans-polyprenyl)benzene-1,4-diol + S-adenosyl-L-methionine = a 5-methoxy-2-methyl-3-(all-trans-polyprenyl)benzene-1,4-diol + S-adenosyl-L-homocysteine + H(+). Its pathway is quinol/quinone metabolism; menaquinone biosynthesis; menaquinol from 1,4-dihydroxy-2-naphthoate: step 2/2. The protein operates within cofactor biosynthesis; ubiquinone biosynthesis. Methyltransferase required for the conversion of demethylmenaquinol (DMKH2) to menaquinol (MKH2) and the conversion of 2-polyprenyl-6-methoxy-1,4-benzoquinol (DDMQH2) to 2-polyprenyl-3-methyl-6-methoxy-1,4-benzoquinol (DMQH2). This Brucella canis (strain ATCC 23365 / NCTC 10854 / RM-666) protein is Ubiquinone/menaquinone biosynthesis C-methyltransferase UbiE.